Here is a 92-residue protein sequence, read N- to C-terminus: Long neurotoxin 77 (92 aa).

The signal sequence occupies residues 1–21; that stretch reads MKTLLLTLVVVTIVCLDLGDS. Intrachain disulfides connect C24–C41, C34–C62, C47–C51, C66–C77, and C78–C83.

It belongs to the three-finger toxin family. Long-chain subfamily. Type II alpha-neurotoxin sub-subfamily. In terms of tissue distribution, expressed by the venom gland.

It localises to the secreted. Functionally, binds with high affinity to muscular (alpha-1/CHRNA1) and neuronal (alpha-7/CHRNA7) nicotinic acetylcholine receptor (nAChR) and inhibits acetylcholine from binding to the receptor, thereby impairing neuromuscular and neuronal transmission. This is Long neurotoxin 77 from Drysdalia coronoides (White-lipped snake).